The chain runs to 587 residues: Cryptochrome-1 (587 aa).

The 130-residue stretch at 3–132 (VNAVHWFRKG…EVIVRISHTL (130 aa)) folds into the Photolyase/cryptochrome alpha/beta domain. Residue K11 forms a Glycyl lysine isopeptide (Lys-Gly) (interchain with G-Cter in ubiquitin) linkage. Positions 50–54 (NRWRF) match the LIR 1 motif. At S71 the chain carries Phosphoserine; by AMPK. Residues 82-87 (DVFPRL) carry the LIR 2 motif. K107 participates in a covalent cross-link: Glycyl lysine isopeptide (Lys-Gly) (interchain with G-Cter in ubiquitin). An LIR 3 motif is present at residues 151–156 (KRFQTL). A Glycyl lysine isopeptide (Lys-Gly) (interchain with G-Cter in ubiquitin) cross-link involves residue K159. S247 is modified (phosphoserine; by MAPK). Residue S252 coordinates FAD. 2 short sequence motifs (LIR) span residues 255 to 260 (LRFGCL) and 271 to 276 (DLYKKV). Phosphoserine; by AMPK is present on S280. An LIR 6 motif is present at residues 285–290 (SLYGQL). Residue Q289 participates in FAD binding. K329 participates in a covalent cross-link: Glycyl lysine isopeptide (Lys-Gly) (interchain with G-Cter in ubiquitin). The LIR 7 signature appears at 335-339 (TGFPW). H355 lines the FAD pocket. The required for inhibition of CLOCK-BMAL1-mediated transcription stretch occupies residues 371–470 (WISWEEGMKV…LIGVNYPKPM (100 aa)). The LIR 8 motif lies at 379 to 384 (KVFEEL). 387–389 (DAD) lines the FAD pocket. 3 consecutive short sequence motifs (LIR) follow at residues 395-400 (GSWMWL), 411-416 (HCYCPV), and 430-435 (RRYLPV). The interval 471 to 493 (VNHAEASRLNIERMKQIYQQLSR) is interaction with TIMELESS. Residue K485 forms a Glycyl lysine isopeptide (Lys-Gly) (interchain with G-Cter in ubiquitin) linkage. 2 short sequence motifs (LIR) span residues 486 to 491 (QIYQQL) and 492 to 497 (SRYRGL). A disordered region spans residues 554–587 (GSSSMGHGLSNGKRPSQEEDTQSIGPKVQRQSTN). S569 is subject to Phosphoserine.

The protein belongs to the DNA photolyase class-1 family. In terms of assembly, component of the circadian core oscillator, which includes the CRY proteins, CLOCK or NPAS2, BMAL1 or BMAL2, CSNK1D and/or CSNK1E, TIMELESS, and the PER proteins. Interacts directly with TIMELESS. Interacts directly with PER1, PER2 and PER3; interaction with PER2 inhibits its ubiquitination and vice versa. Interacts with FBXL21. Interacts with FBXL3. Interacts with CLOCK-BMAL1 independently of PER2 and DNA. Interacts with HDAC1, HDAC2 and SIN3B. Interacts with nuclear receptors AR, NR1D1, NR3C1/GR, RORA and RORC; the interaction with at least NR3C1/GR is ligand dependent. Interacts with PRKDC. Interacts with the G protein subunit alpha GNAS; the interaction may block GPCR-mediated regulation of cAMP concentrations. Interacts with PRMT5. Interacts with EZH2. Interacts with MYBBP1A, DOCK7, HNRNPU, RPL7A, RPL8 and RPS3. Interacts with PPP5C (via TPR repeats). Interacts with MAP1LC3B. Interacts with CLOCK. Interacts with BMAL1. Interacts weakly with HDAC3; this interaction is enhanced in the presence of FBXL3. Interacts with TRIM28, KCTD5 and DDB1 Interacts with HNF4A. Interacts with PSMD2 in a KDM8-dependent manner. Interacts with KDM8 in a FBXL3-dependent manner. Interacts with PPARG in a ligand-dependent manner. Interacts with PPARD (via domain NR LBD) and NR1I2 (via domain NR LBD) in a ligand-dependent manner. Interacts with PPARA, NR1I3 and VDR. The cofactor is FAD. (6R)-5,10-methylene-5,6,7,8-tetrahydrofolate serves as cofactor. Post-translationally, phosphorylation on Ser-247 by MAPK is important for the inhibition of CLOCK-BMAL1-mediated transcriptional activity. Phosphorylation by CSNK1E requires interaction with PER1 or PER2. Phosphorylation at Ser-71 and Ser-280 by AMPK decreases protein stability. Phosphorylation at Ser-569 exhibits a robust circadian rhythm with a peak at CT8, increases protein stability, prevents SCF(FBXL3)-mediated degradation and is antagonized by interaction with PRKDC. In terms of processing, ubiquitinated by the SCF(FBXL3) and SCF(FBXL21) complexes, regulating the balance between degradation and stabilization. The SCF(FBXL3) complex is mainly nuclear and mediates ubiquitination and subsequent degradation of CRY1. In contrast, cytoplasmic SCF(FBXL21) complex-mediated ubiquitination leads to stabilize CRY1 and counteract the activity of the SCF(FBXL3) complex. The SCF(FBXL3) and SCF(FBXL21) complexes probably mediate ubiquitination at different Lys residues. Ubiquitination at Lys-11 and Lys-107 are specifically ubiquitinated by the SCF(FBXL21) complex but not by the SCF(FBXL3) complex. Ubiquitination may be inhibited by PER2. Deubiquitinated by USP7. Undergoes autophagy-mediated degradation in the liver in a time-dependent manner. Autophagic degradation of CRY1 (an inhibitor of gluconeogenesis) occurs during periods of reduced feeding allowing induction of gluconeogenesis and maintenance of blood glucose levels. As to expression, expressed in all tissues tested including spleen, liver, skeletal muscle, kidney, brain, intestine, eye, harderian gland, liver and heart. Highest levels in the eye, brain, kidney and harderian gland. In the brain, especially located to the suprachiasma nucleus (SCN).

The protein localises to the cytoplasm. Its subcellular location is the nucleus. Functionally, transcriptional repressor which forms a core component of the circadian clock. The circadian clock, an internal time-keeping system, regulates various physiological processes through the generation of approximately 24 hour circadian rhythms in gene expression, which are translated into rhythms in metabolism and behavior. It is derived from the Latin roots 'circa' (about) and 'diem' (day) and acts as an important regulator of a wide array of physiological functions including metabolism, sleep, body temperature, blood pressure, endocrine, immune, cardiovascular, and renal function. Consists of two major components: the central clock, residing in the suprachiasmatic nucleus (SCN) of the brain, and the peripheral clocks that are present in nearly every tissue and organ system. Both the central and peripheral clocks can be reset by environmental cues, also known as Zeitgebers (German for 'timegivers'). The predominant Zeitgeber for the central clock is light, which is sensed by retina and signals directly to the SCN. The central clock entrains the peripheral clocks through neuronal and hormonal signals, body temperature and feeding-related cues, aligning all clocks with the external light/dark cycle. Circadian rhythms allow an organism to achieve temporal homeostasis with its environment at the molecular level by regulating gene expression to create a peak of protein expression once every 24 hours to control when a particular physiological process is most active with respect to the solar day. Transcription and translation of core clock components (CLOCK, NPAS2, BMAL1, BMAL2, PER1, PER2, PER3, CRY1 and CRY2) plays a critical role in rhythm generation, whereas delays imposed by post-translational modifications (PTMs) are important for determining the period (tau) of the rhythms (tau refers to the period of a rhythm and is the length, in time, of one complete cycle). A diurnal rhythm is synchronized with the day/night cycle, while the ultradian and infradian rhythms have a period shorter and longer than 24 hours, respectively. Disruptions in the circadian rhythms contribute to the pathology of cardiovascular diseases, cancer, metabolic syndromes and aging. A transcription/translation feedback loop (TTFL) forms the core of the molecular circadian clock mechanism. Transcription factors, CLOCK or NPAS2 and BMAL1 or BMAL2, form the positive limb of the feedback loop, act in the form of a heterodimer and activate the transcription of core clock genes and clock-controlled genes (involved in key metabolic processes), harboring E-box elements (5'-CACGTG-3') within their promoters. The core clock genes: PER1/2/3 and CRY1/2 which are transcriptional repressors form the negative limb of the feedback loop and interact with the CLOCK|NPAS2-BMAL1|BMAL2 heterodimer inhibiting its activity and thereby negatively regulating their own expression. This heterodimer also activates nuclear receptors NR1D1/2 and RORA/B/G, which form a second feedback loop and which activate and repress BMAL1 transcription, respectively. CRY1 and CRY2 have redundant functions but also differential and selective contributions at least in defining the pace of the SCN circadian clock and its circadian transcriptional outputs. More potent transcriptional repressor in cerebellum and liver than CRY2, though more effective in lengthening the period of the SCN oscillator. On its side, CRY2 seems to play a critical role in tuning SCN circadian period by opposing the action of CRY1. With CRY2, is dispensable for circadian rhythm generation but necessary for the development of intercellular networks for rhythm synchrony. Capable of translocating circadian clock core proteins such as PER proteins to the nucleus. Interacts with CLOCK-BMAL1 independently of PER proteins and is found at CLOCK-BMAL1-bound sites, suggesting that CRY may act as a molecular gatekeeper to maintain CLOCK-BMAL1 in a poised and repressed state until the proper time for transcriptional activation. Represses the CLOCK-BMAL1 induced transcription of BHLHE40/DEC1, ATF4, MTA1, KLF10 and NAMPT. May repress circadian target genes expression in collaboration with HDAC1 and HDAC2 through histone deacetylation. Mediates the clock-control activation of ATR and modulates ATR-mediated DNA damage checkpoint. In liver, mediates circadian regulation of cAMP signaling and gluconeogenesis by binding to membrane-coupled G proteins and blocking glucagon-mediated increases in intracellular cAMP concentrations and CREB1 phosphorylation. Inhibits hepatic gluconeogenesis by decreasing nuclear FOXO1 levels that down-regulates gluconeogenic gene expression. Besides its role in the maintenance of the circadian clock, is also involved in the regulation of other processes. Represses glucocorticoid receptor NR3C1/GR-induced transcriptional activity by binding to glucocorticoid response elements (GREs). Plays a key role in glucose and lipid metabolism modulation, in part, through the transcriptional regulation of genes involved in these pathways, such as LEP or ACSL4. Represses PPARD and its target genes in the skeletal muscle and limits exercise capacity. Plays an essential role in the generation of circadian rhythms in the retina. Represses the transcriptional activity of NR1I2. The protein is Cryptochrome-1 (CRY1) of Spalax judaei (Judean Mountains blind mole rat).